Consider the following 349-residue polypeptide: Phenylalanine--tRNA ligase alpha subunit (349 aa).

Glu-259 is a Mg(2+) binding site.

This sequence belongs to the class-II aminoacyl-tRNA synthetase family. Phe-tRNA synthetase alpha subunit type 1 subfamily. Tetramer of two alpha and two beta subunits. Mg(2+) is required as a cofactor.

It localises to the cytoplasm. The catalysed reaction is tRNA(Phe) + L-phenylalanine + ATP = L-phenylalanyl-tRNA(Phe) + AMP + diphosphate + H(+). This Lactobacillus delbrueckii subsp. bulgaricus (strain ATCC 11842 / DSM 20081 / BCRC 10696 / JCM 1002 / NBRC 13953 / NCIMB 11778 / NCTC 12712 / WDCM 00102 / Lb 14) protein is Phenylalanine--tRNA ligase alpha subunit.